The chain runs to 483 residues: GTPase Der (483 aa).

EngA-type G domains are found at residues 3 to 167 and 212 to 387; these read FTVA…GEER and LRIA…EIWN. Residues 9–16, 56–60, 119–122, 218–225, 265–269, and 330–333 contribute to the GTP site; these read GRPNVGKS, DTAGL, NKAE, GRPNAGKS, and NKWD. Positions 388–472 constitute a KH-like domain; sequence RRVSTGRLNR…PIRLSLRTSD (85 aa).

This sequence belongs to the TRAFAC class TrmE-Era-EngA-EngB-Septin-like GTPase superfamily. EngA (Der) GTPase family. Associates with the 50S ribosomal subunit.

Its function is as follows. GTPase that plays an essential role in the late steps of ribosome biogenesis. This Brucella anthropi (strain ATCC 49188 / DSM 6882 / CCUG 24695 / JCM 21032 / LMG 3331 / NBRC 15819 / NCTC 12168 / Alc 37) (Ochrobactrum anthropi) protein is GTPase Der.